Here is a 188-residue protein sequence, read N- to C-terminus: tRNA(Phe) 7-((3-amino-3-carboxypropyl)-4-demethylwyosine(37)-N(4))-methyltransferase (188 aa).

This sequence belongs to the TYW3 family.

The enzyme catalyses 4-demethyl-7-[(3S)-3-amino-3-carboxypropyl]wyosine(37) in tRNA(Phe) + S-adenosyl-L-methionine = 7-[(3S)-3-amino-3-carboxypropyl]wyosine(37) in tRNA(Phe) + S-adenosyl-L-homocysteine + H(+). In terms of biological role, S-adenosyl-L-methionine-dependent methyltransferase that acts as a component of the wyosine derivatives biosynthesis pathway. Probably methylates N-4 position of wybutosine-86 to produce wybutosine-72. In Aeropyrum pernix (strain ATCC 700893 / DSM 11879 / JCM 9820 / NBRC 100138 / K1), this protein is tRNA(Phe) 7-((3-amino-3-carboxypropyl)-4-demethylwyosine(37)-N(4))-methyltransferase.